Reading from the N-terminus, the 507-residue chain is Histidine ammonia-lyase (507 aa).

The 5-imidazolinone (Ala-Gly) cross-link spans 141 to 143 (ASG). S142 carries the post-translational modification 2,3-didehydroalanine (Ser).

It belongs to the PAL/histidase family. In terms of processing, contains an active site 4-methylidene-imidazol-5-one (MIO), which is formed autocatalytically by cyclization and dehydration of residues Ala-Ser-Gly.

The protein resides in the cytoplasm. The enzyme catalyses L-histidine = trans-urocanate + NH4(+). The protein operates within amino-acid degradation; L-histidine degradation into L-glutamate; N-formimidoyl-L-glutamate from L-histidine: step 1/3. The polypeptide is Histidine ammonia-lyase (Burkholderia lata (strain ATCC 17760 / DSM 23089 / LMG 22485 / NCIMB 9086 / R18194 / 383)).